Consider the following 564-residue polypeptide: Urocanate hydratase (564 aa).

NAD(+) is bound by residues 58–59 (GG), Gln136, 182–184 (GMG), Glu202, Arg207, 248–249 (NA), 269–273 (QTSAH), 279–280 (YL), and Tyr328. The active site involves Cys416. Gly498 provides a ligand contact to NAD(+).

Belongs to the urocanase family. It depends on NAD(+) as a cofactor.

It is found in the cytoplasm. It carries out the reaction 4-imidazolone-5-propanoate = trans-urocanate + H2O. It functions in the pathway amino-acid degradation; L-histidine degradation into L-glutamate; N-formimidoyl-L-glutamate from L-histidine: step 2/3. In terms of biological role, catalyzes the conversion of urocanate to 4-imidazolone-5-propionate. The sequence is that of Urocanate hydratase from Aliivibrio salmonicida (strain LFI1238) (Vibrio salmonicida (strain LFI1238)).